A 783-amino-acid chain; its full sequence is MRWQCGTRFRGLRPAVAPWTALLALGLPGWVLAVSATAAAVVPEQHASVAGQHPLDWLLTDRGPFHRAQEYADFMERYRQGFTTRYRIYREFARWKVNNLALERKDFFSLPLPLAPEFIRNIRLLGRRPNLQQVTENLIKKYGTHFLLSATLGGEESLTIFVDKQKLGRKTETTGGASIIGGSGNSTAVSLETLHQLAASYFIDRESTLRRLHHIQIATGAIKVTETRTGPLGCSNYDNLDSVSSVLVQSPENKVQLLGLQVLLPEYLRERFVAAALSYITCSSEGELVCKENDCWCKCSPTFPECNCPDADIQAMEDSLLQIQDSWATHNRQFEESEEFQALLKRLPDDRFLNSTAISQFWAMDTSLQHRYQQLGAGLKVLFKKTHRILRRLFNLCKRCHRQPRFRLPKERSLSYWWNRIQSLLYCGESTFPGTFLEQSHSCTCPYDQSSCQGPIPCALGEGPACAHCAPDNSTRCGSCNPGYVLAQGLCRPEVAESLENFLGLETDLQDLELKYLLQKQDSRIEVHSIFISNDMRLGSWFDPSWRKRMLLTLKSNKYKPGLVHVMLALSLQICLTKNSTLEPVMAIYVNPFGGSHSESWFMPVNEGSFPDWERTNVDAAAQCQNWTITLGNRWKTFFETVHVYLRSRIKSLDDSSNETIYYEPLEMTDPSKNLGYMKINTLQVFGYSLPFDPDAIRDLILQLDYPYTQGSQDSALLQLIELRDRVNQLSPPGKVRLDLFSCLLRHRLKLANNEVGRIQSSLRAFNSKLPNPVEYETGKLCS.

A signal peptide spans 1 to 33 (MRWQCGTRFRGLRPAVAPWTALLALGLPGWVLA). The region spanning 85-281 (RYRIYREFAR…FVAAALSYIT (197 aa)) is the MACPF domain. N-linked (GlcNAc...) asparagine glycans are attached at residues Asn185, Asn354, Asn473, Asn579, Asn626, and Asn658.

The protein belongs to the BRINP family.

It localises to the secreted. Inhibits neuronal cell proliferation by negative regulation of the cell cycle transition. The sequence is that of BMP/retinoic acid-inducible neural-specific protein 2 (BRINP2) from Homo sapiens (Human).